We begin with the raw amino-acid sequence, 234 residues long: MTTSDLPAFWTVIPAAGVGSRMRADRPKQYLDLAGRTVIERTLDCFLEHPMLRGLVVCLAEDDPYWPGLDCAASRHVQRAAGGVERADSVLSGLLRLLELGARADDWVLVHDAARPNLTRGDLDRLLEELAEDPVGGLLAVPARDTLKRSDRDGRVSETIDRSVVWLAYTPQMFRLGALHRALADALVAGVAITDEASAMEWAGYAPKLVEGRADNLKITTPEDLLRLQRSFPH.

The protein belongs to the IspD/TarI cytidylyltransferase family. IspD subfamily.

It catalyses the reaction 2-C-methyl-D-erythritol 4-phosphate + CTP + H(+) = 4-CDP-2-C-methyl-D-erythritol + diphosphate. Its pathway is isoprenoid biosynthesis; isopentenyl diphosphate biosynthesis via DXP pathway; isopentenyl diphosphate from 1-deoxy-D-xylulose 5-phosphate: step 2/6. In terms of biological role, catalyzes the formation of 4-diphosphocytidyl-2-C-methyl-D-erythritol from CTP and 2-C-methyl-D-erythritol 4-phosphate (MEP). This chain is 2-C-methyl-D-erythritol 4-phosphate cytidylyltransferase, found in Pseudomonas paraeruginosa (strain DSM 24068 / PA7) (Pseudomonas aeruginosa (strain PA7)).